We begin with the raw amino-acid sequence, 201 residues long: dTTP/UTP pyrophosphatase (201 aa).

Catalysis depends on Asp73, which acts as the Proton acceptor.

Belongs to the Maf family. YhdE subfamily. Requires a divalent metal cation as cofactor.

Its subcellular location is the cytoplasm. It carries out the reaction dTTP + H2O = dTMP + diphosphate + H(+). It catalyses the reaction UTP + H2O = UMP + diphosphate + H(+). Its function is as follows. Nucleoside triphosphate pyrophosphatase that hydrolyzes dTTP and UTP. May have a dual role in cell division arrest and in preventing the incorporation of modified nucleotides into cellular nucleic acids. The polypeptide is dTTP/UTP pyrophosphatase (Pseudomonas aeruginosa (strain ATCC 15692 / DSM 22644 / CIP 104116 / JCM 14847 / LMG 12228 / 1C / PRS 101 / PAO1)).